A 242-amino-acid polypeptide reads, in one-letter code: MSPRERQAALVLFSGGQDSSVCLAWALERYDRVETVGFDYGQRHAIEMQARQAVRREVAARFPQWAERLGEDHVLDIRSFGAVAQSALTADRAIEMTERGLPSTFVPGRNLVFLTYAAALADRRGIDALVGGMCETDFSGYPDCRRDTLDAMQAALNLGMDRNFRIETPLMWLTKAQTWGLSKQLGGEALVSLIVEESHTCYQGERGQLHAWGHGCGTCPACELREKGYVEWDMAGREALAQ.

13-23 (FSGGQDSSVCL) provides a ligand contact to ATP. Cysteine 201, cysteine 216, cysteine 219, and cysteine 222 together coordinate Zn(2+).

It belongs to the QueC family. The cofactor is Zn(2+).

It carries out the reaction 7-carboxy-7-deazaguanine + NH4(+) + ATP = 7-cyano-7-deazaguanine + ADP + phosphate + H2O + H(+). It functions in the pathway purine metabolism; 7-cyano-7-deazaguanine biosynthesis. Catalyzes the ATP-dependent conversion of 7-carboxy-7-deazaguanine (CDG) to 7-cyano-7-deazaguanine (preQ(0)). This chain is 7-cyano-7-deazaguanine synthase, found in Caulobacter vibrioides (strain ATCC 19089 / CIP 103742 / CB 15) (Caulobacter crescentus).